The following is a 404-amino-acid chain: Interferon-activable protein 205-A (404 aa).

In terms of domain architecture, Pyrin spans Met1 to Glu88. Positions Glu85–Pro198 are disordered. Low complexity-rich tracts occupy residues Ala102–Ser112 and Thr122–Ala132. Residues Gly137–Lys147 are compositionally biased toward basic and acidic residues. The span at Gln168–Ala185 shows a compositional bias: low complexity. Residues Lys186–Ile197 are compositionally biased toward polar residues. Positions Pro192 to Thr392 constitute an HIN-200 domain.

Belongs to the HIN-200 family.

The protein resides in the nucleus. In terms of biological role, may act as a transcriptional regulator in the myeloid lineage. Inhibits cell growth via p53/TP53 and RB1-dependent and independent pathways. In Mus musculus (Mouse), this protein is Interferon-activable protein 205-A (Ifi205a).